We begin with the raw amino-acid sequence, 108 residues long: uncharacterized protein (108 aa).

Residue Asn33 is glycosylated (N-linked (GlcNAc...) asparagine).

In terms of processing, N-glycosylated.

This is an uncharacterized protein from Saccharomyces cerevisiae (strain ATCC 204508 / S288c) (Baker's yeast).